The primary structure comprises 616 residues: Fatty acyl-CoA reductase 2, chloroplastic (616 aa).

Residues 1–14 (MEALFLSSSSSSIV) constitute a chloroplast transit peptide. The NAD(P)H-binding signature appears at 133–143 (FLITGSTGFLA). Catalysis depends on residues Tyr-357 and Lys-361.

This sequence belongs to the fatty acyl-CoA reductase family. In terms of tissue distribution, expressed in the tapetum of anthers.

It localises to the plastid. The protein localises to the chloroplast. It carries out the reaction a long-chain fatty acyl-CoA + 2 NADPH + 2 H(+) = a long-chain primary fatty alcohol + 2 NADP(+) + CoA. It catalyses the reaction hexadecanoyl-CoA + 2 NADPH + 2 H(+) = hexadecan-1-ol + 2 NADP(+) + CoA. The enzyme catalyses hexadecanoyl-[ACP] + 2 NADPH + 2 H(+) = hexadecan-1-ol + holo-[ACP] + 2 NADP(+). Functionally, catalyzes the reduction of fatty acyl-CoA and -ACP (acyl carrier protein) substrates to fatty alcohols. Triggers the accumulation of C16 and C18 fatty alcohols; converts palmitoyl-acyl carrier protein to the corresponding C16:0 alcohol with NAD(P)H as electron donor, but seems inactive toward palmitoyl- or other acyl-coenzyme A. Also triggers the formation of some C16:0 aldehydes. Involved in the synthesis of the lipid component in sporopollenin. Required for exine patterning of pollen grain by mediating the formation of pollen wall substances. In Arabidopsis thaliana (Mouse-ear cress), this protein is Fatty acyl-CoA reductase 2, chloroplastic.